The following is a 73-amino-acid chain: Large ribosomal subunit protein bL31 (73 aa).

The Zn(2+) site is built by cysteine 16, cysteine 18, cysteine 37, and cysteine 40.

It belongs to the bacterial ribosomal protein bL31 family. Type A subfamily. As to quaternary structure, part of the 50S ribosomal subunit. It depends on Zn(2+) as a cofactor.

Binds the 23S rRNA. This is Large ribosomal subunit protein bL31 from Hamiltonella defensa subsp. Acyrthosiphon pisum (strain 5AT).